The chain runs to 155 residues: Cardioactive peptide (155 aa).

A signal peptide spans 1 to 23; it reads MRTSMRISLRLLALLACAICSQA. Residues 24-49 constitute a propeptide that is removed on maturation; that stretch reads SLERENNEGTNMANHKLSGVIQWKYE. Cysteine 54 and cysteine 60 are oxidised to a cystine. Cysteine amide is present on cysteine 60. Positions 64–155 are excised as a propeptide; it reads RTYPSYPPFS…MQQLEERESK (92 aa). Residues 135–155 form a disordered region; sequence NKQKMLQNEKEMQQLEERESK. A compositionally biased stretch (basic and acidic residues) spans 141-155; that stretch reads QNEKEMQQLEERESK.

In terms of tissue distribution, central nervous system; most neurons exhibit coexpression with Burs.

The protein resides in the secreted. Functionally, cardioregulatory neurohormone that increases heart beat rate during adult wing inflation; has no effect on beat amplitude. The effect of CCAP is both ino- and chronotropic. The chain is Cardioactive peptide from Drosophila melanogaster (Fruit fly).